A 130-amino-acid polypeptide reads, in one-letter code: MSMQDPIADMLTRIRNGQAANKAAVTMPSSKLKVAIANVLKEEGFIEDFKVEGDTKPELELTLKYFQGKAVVESIQRVSRPGLRIYKRKDELPKVMAGLGIAVVSTSKGVMTDRAARQAGLGGEIICYVA.

The protein belongs to the universal ribosomal protein uS8 family. In terms of assembly, part of the 30S ribosomal subunit. Contacts proteins S5 and S12.

Its function is as follows. One of the primary rRNA binding proteins, it binds directly to 16S rRNA central domain where it helps coordinate assembly of the platform of the 30S subunit. The chain is Small ribosomal subunit protein uS8 from Shigella boydii serotype 18 (strain CDC 3083-94 / BS512).